The primary structure comprises 310 residues: Thymidine kinase (310 aa).

17-24 (GPFGIGKT) serves as a coordination point for ATP. Glu-45 acts as the Proton acceptor in catalysis. Gln-86 serves as a coordination point for substrate. Arg-176 lines the ATP pocket. Substrate is bound at residue Arg-182.

The protein belongs to the herpesviridae thymidine kinase family. Homodimer.

It catalyses the reaction thymidine + ATP = dTMP + ADP + H(+). Its function is as follows. Catalyzes the transfer of the gamma-phospho group of ATP to thymidine to generate dTMP in the salvage pathway of pyrimidine synthesis. The dTMP serves as a substrate for DNA polymerase during viral DNA replication. Allows the virus to be reactivated and to grow in non-proliferative cells lacking a high concentration of phosphorylated nucleic acid precursors. The protein is Thymidine kinase of Gallus gallus (Chicken).